A 328-amino-acid chain; its full sequence is Gonadotropin-releasing hormone receptor (328 aa).

Residues 1-38 (MANSASPEQNQNHCSAINNSIPLMQGNLPTLTLSGKIR) lie on the Extracellular side of the membrane. N-linked (GlcNAc...) asparagine glycosylation occurs at asparagine 18. A helical transmembrane segment spans residues 39-58 (VTVTFFLFLLSATFNASFLL). Residues 59–77 (KLQKWTQKKEKGKKLSRMK) lie on the Cytoplasmic side of the membrane. Residues 78–97 (LLLKHLTLANLLETLIVMPL) form a helical membrane-spanning segment. Residues 98–115 (DGMWNITVQWYAGELLCK) are Extracellular-facing. The N-linked (GlcNAc...) asparagine glycan is linked to asparagine 102. Residues cysteine 114 and cysteine 196 are joined by a disulfide bond. A helical membrane pass occupies residues 116-137 (VLSYLKLFSMYAPAFMMVVISL). The Cytoplasmic segment spans residues 138 to 164 (DRSLAITRPLALKSNSKVGQSMVGLAW). Residues 165 to 184 (ILSSVFAGPQLYIFRMIHLA) traverse the membrane as a helical segment. Residues 185–212 (DSSGQTKVFSQCVTHCSFSQWWHQAFYN) lie on the Extracellular side of the membrane. The chain crosses the membrane as a helical span at residues 213–232 (FFTFSCLFIIPLFIMLICNA). Topologically, residues 233-281 (KIIFTLTRVLHQDPHELQLNQSKNNIPRARLKTLKMTVAFATSFTVCWT) are cytoplasmic. The chain crosses the membrane as a helical span at residues 282–300 (PYYVLGIWYWFDPEMLNRL). Residues 301–306 (SDPVNH) are Extracellular-facing. Residues 307-326 (FFFLFAFLNPCFDPLIYGYF) form a helical membrane-spanning segment. Residues 327–328 (SL) lie on the Cytoplasmic side of the membrane.

This sequence belongs to the G-protein coupled receptor 1 family. Pituitary, ovary, testis, breast and prostate but not in liver and spleen.

It is found in the cell membrane. Receptor for gonadotropin releasing hormone (GnRH) that mediates the action of GnRH to stimulate the secretion of the gonadotropic hormones luteinizing hormone (LH) and follicle-stimulating hormone (FSH). This receptor mediates its action by association with G-proteins that activate a phosphatidylinositol-calcium second messenger system. Isoform 2 may act as an inhibitor of GnRH-R signaling. In Homo sapiens (Human), this protein is Gonadotropin-releasing hormone receptor (GNRHR).